Consider the following 33-residue polypeptide: Cytochrome b6-f complex subunit 8 (33 aa).

The chain crosses the membrane as a helical span at residues 2–22 (LFTLAWASLAAVFSFSIAMVV).

Belongs to the PetN family. The 4 large subunits of the cytochrome b6-f complex are cytochrome b6, subunit IV (17 kDa polypeptide, PetD), cytochrome f and the Rieske protein, while the 4 small subunits are PetG, PetL, PetM and PetN. The complex functions as a dimer.

It localises to the cellular thylakoid membrane. Component of the cytochrome b6-f complex, which mediates electron transfer between photosystem II (PSII) and photosystem I (PSI), cyclic electron flow around PSI, and state transitions. The chain is Cytochrome b6-f complex subunit 8 from Prochlorococcus marinus (strain MIT 9303).